A 157-amino-acid polypeptide reads, in one-letter code: Transcriptional regulator AzlB (157 aa).

Residues 5 to 66 enclose the HTH asnC-type domain; the sequence is LDETDKAILR…IVDEKKLGIE (62 aa). Positions 24–43 form a DNA-binding region, H-T-H motif; the sequence is NLNLSKKIGLSPSACLARTK.

Functionally, transcriptional repressor of the azlBCD operon involved in branched-chain amino acid transport. In Bacillus subtilis (strain 168), this protein is Transcriptional regulator AzlB (azlB).